The following is a 658-amino-acid chain: Serine/threonine-protein kinase shk1/pak1 (658 aa).

4 disordered regions span residues 1 to 21 (MERG…ITPI), 39 to 104 (RKLK…SYDE), 126 to 147 (GGSS…STVI), and 213 to 365 (GAKP…QQSN). The segment covering 66–98 (PLSQSRTTVSRVSLGSRQHSSSSIRKLQTNVSD) has biased composition (polar residues). A compositionally biased stretch (low complexity) spans 129-140 (SPTSSYGSGSAS). One can recognise a CRIB domain in the interval 147-160 (ISSPFDPKHVTHVG). Low complexity-rich tracts occupy residues 226 to 254 (PLLS…LYPS) and 262 to 272 (ASSSSSPLLSS). A compositionally biased stretch (polar residues) spans 273 to 300 (QTVKTTTSNASRQPSPLVSSKSTDNIIR). 2 positions are modified to phosphoserine: Ser-301 and Ser-303. One can recognise a Protein kinase domain in the interval 386 to 637 (YRNFVKIGQG…SGELLRHPFL (252 aa)). ATP contacts are provided by residues 392–400 (IGQGASGDV) and Lys-415. Residue Asp-505 is the Proton acceptor of the active site.

This sequence belongs to the protein kinase superfamily. STE Ser/Thr protein kinase family. STE20 subfamily. Forms an activated complex with GTP-bound ras-like cdc42. Interacts with skb1 and the SH3 domain of skb5 via its amino-terminal regulatory domain. Skb1, cdc42 and shk1 are able to form a ternary complex in vivo. Interacts with rga8 and may interact with byr2. In terms of processing, autophosphorylated on serine residues.

Its subcellular location is the cytoplasm. It localises to the cytoskeleton. The protein localises to the spindle. The enzyme catalyses L-seryl-[protein] + ATP = O-phospho-L-seryl-[protein] + ADP + H(+). It carries out the reaction L-threonyl-[protein] + ATP = O-phospho-L-threonyl-[protein] + ADP + H(+). MAP4K component of the MAPK pathway required for the mating pheromone response. Phosphorylates histone H2B to form H2BS10ph. Phosphorylates tea1. Required for skb1-dependent mitotic inhibitory function. Regulates microtubule dynamics and cell polarity. The sequence is that of Serine/threonine-protein kinase shk1/pak1 (shk1) from Schizosaccharomyces pombe (strain 972 / ATCC 24843) (Fission yeast).